The sequence spans 160 residues: Secreted RxLR effector protein RXLR-C11 (160 aa).

Residues 1–19 form the signal peptide; the sequence is MHFSLVLLVFAAIVIPICA. The short motif at 58-75 is the RxLR-dEER element; it reads RLLRMNDKAVISDHEEER.

Belongs to the RxLR effector family.

The protein localises to the secreted. Its subcellular location is the host cell membrane. It localises to the host nucleus. In terms of biological role, secreted effector that suppresses pattern-triggered immunity (PTI) in plant host. This chain is Secreted RxLR effector protein RXLR-C11, found in Plasmopara halstedii (Downy mildew of sunflower).